Here is a 2264-residue protein sequence, read N- to C-terminus: Protein Ycf2 (2264 aa).

1611–1618 (GSIGTGRS) is a binding site for ATP.

It belongs to the Ycf2 family.

It is found in the plastid. Its subcellular location is the chloroplast stroma. In terms of biological role, probable ATPase of unknown function. Its presence in a non-photosynthetic plant (Epifagus virginiana) and experiments in tobacco indicate that it has an essential function which is probably not related to photosynthesis. This is Protein Ycf2 from Lactuca sativa (Garden lettuce).